The chain runs to 184 residues: uncharacterized protein (184 aa).

Belongs to the eIF-2B alpha/beta/delta subunits family.

This is an uncharacterized protein from Rhodospirillum rubrum.